The chain runs to 192 residues: Ribosomal RNA small subunit methyltransferase G (192 aa).

Residues Gly63, Phe68, 112–113 (IE), and Arg125 contribute to the S-adenosyl-L-methionine site.

It belongs to the methyltransferase superfamily. RNA methyltransferase RsmG family.

It localises to the cytoplasm. The enzyme catalyses guanosine(527) in 16S rRNA + S-adenosyl-L-methionine = N(7)-methylguanosine(527) in 16S rRNA + S-adenosyl-L-homocysteine. In terms of biological role, specifically methylates the N7 position of guanine in position 527 of 16S rRNA. In Rickettsia felis (strain ATCC VR-1525 / URRWXCal2) (Rickettsia azadi), this protein is Ribosomal RNA small subunit methyltransferase G.